The primary structure comprises 162 residues: Phenazine biosynthesis protein PhzB1 (162 aa).

This sequence belongs to the PhzA/PhzB family. As to quaternary structure, homodimer.

It participates in antibiotic biosynthesis; phenazine biosynthesis. Its function is as follows. Involved in the biosynthesis of the antibiotic phenazine, a nitrogen-containing heterocyclic molecule. PhzB1 (operon phzA1B1C1E1F1G1) has a role in the biosynthesis of the phenazine during planktonic growth. The sequence is that of Phenazine biosynthesis protein PhzB1 from Pseudomonas aeruginosa (strain ATCC 15692 / DSM 22644 / CIP 104116 / JCM 14847 / LMG 12228 / 1C / PRS 101 / PAO1).